The primary structure comprises 243 residues: L-fucose operon activator (243 aa).

Residues 1–57 form the HTH deoR-type domain; that stretch reads MKAARQQAIVDLLLNHTSLTTEALSEQLKVSKETIRRDLNELQTQGKILRNHGRAKY. The H-T-H motif DNA-binding region spans 19–38; it reads LTTEALSEQLKVSKETIRRD.

Its function is as follows. Transcriptional activator of the fuc operon. The polypeptide is L-fucose operon activator (fucR) (Escherichia coli (strain K12)).